Reading from the N-terminus, the 300-residue chain is Probable alpha-L-glutamate ligase (300 aa).

In terms of domain architecture, ATP-grasp spans 104-287; sequence LQLLARQGID…IAGRMIEYIE (184 aa). ATP-binding positions include lysine 141, 178–179, aspartate 187, and 211–213; these read EY and RSN. Mg(2+) is bound by residues aspartate 248, glutamate 260, and asparagine 262. Mn(2+) contacts are provided by aspartate 248, glutamate 260, and asparagine 262.

It belongs to the RimK family. It depends on Mg(2+) as a cofactor. Requires Mn(2+) as cofactor.

This is Probable alpha-L-glutamate ligase from Serratia proteamaculans (strain 568).